The sequence spans 360 residues: UPF0284 protein APE_2029.1 (360 aa).

Belongs to the UPF0284 family.

The protein is UPF0284 protein APE_2029.1 of Aeropyrum pernix (strain ATCC 700893 / DSM 11879 / JCM 9820 / NBRC 100138 / K1).